The primary structure comprises 307 residues: Ubiquitin recognition factor in ER-associated degradation protein 1 (307 aa).

At methionine 1 the chain carries N-acetylmethionine. A phosphoserine mark is found at serine 129, serine 231, serine 245, serine 247, and serine 299. 2 disordered regions span residues 230–255 (GSGN…GDIK) and 288–307 (GRFI…GRKP).

This sequence belongs to the UFD1 family. Heterodimer with NPLOC4, this heterodimer binds VCP and inhibits Golgi membrane fusion. Interacts with USP13. Interacts with ZFAND2B; probably through VCP.

It localises to the nucleus. It is found in the cytoplasm. The protein resides in the cytosol. It participates in protein degradation; proteasomal ubiquitin-dependent pathway. Functionally, essential component of the ubiquitin-dependent proteolytic pathway which degrades ubiquitin fusion proteins. The ternary complex containing UFD1, VCP and NPLOC4 binds ubiquitinated proteins and is necessary for the export of misfolded proteins from the ER to the cytoplasm, where they are degraded by the proteasome. The NPLOC4-UFD1-VCP complex regulates spindle disassembly at the end of mitosis and is necessary for the formation of a closed nuclear envelope. It may be involved in the development of some ectoderm-derived structures. Acts as a negative regulator of type I interferon production via the complex formed with VCP and NPLOC4, which binds to RIGI and recruits RNF125 to promote ubiquitination and degradation of RIGI. The sequence is that of Ubiquitin recognition factor in ER-associated degradation protein 1 from Mus musculus (Mouse).